The primary structure comprises 77 residues: Sec-independent protein translocase protein TatA (77 aa).

A helical transmembrane segment spans residues 1–21 (MGSLSIWHWIVVIAVVLLLFG). Basic and acidic residues predominate over residues 43 to 60 (MQDDDKAPEKTEPVKSID). The tract at residues 43–77 (MQDDDKAPEKTEPVKSIDHGATPSATRTDVGSKAV) is disordered.

Belongs to the TatA/E family. The Tat system comprises two distinct complexes: a TatABC complex, containing multiple copies of TatA, TatB and TatC subunits, and a separate TatA complex, containing only TatA subunits. Substrates initially bind to the TatABC complex, which probably triggers association of the separate TatA complex to form the active translocon.

It is found in the cell inner membrane. Its function is as follows. Part of the twin-arginine translocation (Tat) system that transports large folded proteins containing a characteristic twin-arginine motif in their signal peptide across membranes. TatA could form the protein-conducting channel of the Tat system. This is Sec-independent protein translocase protein TatA from Bradyrhizobium sp. (strain BTAi1 / ATCC BAA-1182).